The sequence spans 338 residues: 1-aminocyclopropane-1-carboxylate deaminase (338 aa).

K51 is subject to N6-(pyridoxal phosphate)lysine. S78 acts as the Nucleophile in catalysis.

The protein belongs to the ACC deaminase/D-cysteine desulfhydrase family. In terms of assembly, homotrimer. The cofactor is pyridoxal 5'-phosphate.

It catalyses the reaction 1-aminocyclopropane-1-carboxylate + H2O = 2-oxobutanoate + NH4(+). Functionally, catalyzes a cyclopropane ring-opening reaction, the irreversible conversion of 1-aminocyclopropane-1-carboxylate (ACC) to ammonia and alpha-ketobutyrate. Allows growth on ACC as a nitrogen source. The chain is 1-aminocyclopropane-1-carboxylate deaminase from Burkholderia ambifaria (strain ATCC BAA-244 / DSM 16087 / CCUG 44356 / LMG 19182 / AMMD) (Burkholderia cepacia (strain AMMD)).